Reading from the N-terminus, the 546-residue chain is Aladin (546 aa).

Position 2 is an N-acetylcysteine (cysteine 2). Phosphoserine is present on serine 33. WD repeat units lie at residues 142–180, 183–222, 234–274, 280–316, 324–380, 386–433, and 442–482; these read EFAQ…VYNA, TIVP…IWTL, GCAQ…VWDV, VPLP…VWEA, WPTL…IVAD, IQTP…LFRT, and LPCG…IAHI. Phosphoserine occurs at positions 495, 511, 522, and 525. A disordered region spans residues 500–546; sequence RAQEPPAGGGGSIHDLPLFTETSPTSAPWDPLPGPPPVLPHSPHSHL. The span at 529 to 539 shows a compositional bias: pro residues; that stretch reads DPLPGPPPVLP. The residue at position 541 (serine 541) is a Phosphoserine. The Microbody targeting signal signature appears at 544–546; sequence SHL.

In terms of assembly, interacts with NDC1, the interaction is required for nuclear pore localization. Interacts with the inactive form aurora kinase AURKA. Interacts with PGRMC2. In terms of tissue distribution, widely expressed. Particularly abundant in cerebellum, corpus callosum, adrenal gland, pituitary gland, gastrointestinal structures and fetal lung.

It localises to the nucleus. Its subcellular location is the nuclear pore complex. The protein resides in the cytoplasm. It is found in the cytoskeleton. The protein localises to the spindle pole. It localises to the nucleus envelope. Functionally, plays a role in the normal development of the peripheral and central nervous system. Required for the correct localization of aurora kinase AURKA and the microtubule minus end-binding protein NUMA1 as well as a subset of AURKA targets which ensures proper spindle formation and timely chromosome alignment. This Homo sapiens (Human) protein is Aladin (AAAS).